The sequence spans 464 residues: Arabinose-proton symporter (464 aa).

Helical transmembrane passes span 21-43 (GFVI…DTAV), 63-85 (GLVI…FLSD), 92-111 (ILMT…ALSQ), 116-138 (LIIA…VTYI), 150-172 (LSSL…NLAV), 185-207 (GWRW…LLVV), 266-288 (ALVI…ITYY), 303-325 (GFVT…VLLI), 332-354 (KLMS…SFYF), 364-386 (VLIL…IMIS), 398-420 (AGIA…PMMI), and 424-446 (GLAY…VVTI).

Belongs to the major facilitator superfamily. Sugar transporter (TC 2.A.1.1) family.

Its subcellular location is the cell membrane. It catalyses the reaction L-arabinose(in) + H(+)(in) = L-arabinose(out) + H(+)(out). The enzyme catalyses D-galactose(in) + H(+)(in) = D-galactose(out) + H(+)(out). The catalysed reaction is D-xylose(in) + H(+)(in) = D-xylose(out) + H(+)(out). Uptake of L-arabinose across the cytoplasmic membrane with the concomitant transport of protons into the cell (symport system). In the presence of inducing amounts of L-arabinose, can import both D-galactose and D-xylose. Can also transport the disaccharide alpha-1,5-arabinobiose. The sequence is that of Arabinose-proton symporter (araE) from Bacillus subtilis (strain 168).